Reading from the N-terminus, the 869-residue chain is H(+)/Cl(-) exchange transporter 6 (869 aa).

At M1 to K80 the chain is on the cytoplasmic side. The next 2 helical transmembrane spans lie at W81 to V113 and L128 to I150. The short motif at G156–P160 is the Selectivity filter part_1 element. S157 provides a ligand contact to chloride. An intramembrane region (helical) is located at residues I159 to L166. 2 consecutive transmembrane segments (helical) span residues R176–G194 and E200–F217. A Selectivity filter part_2 motif is present at residues E198–P202. Intramembrane regions (helical) lie at residues F241–A253 and P257–L265. The next 3 membrane-spanning stretches (helical) occupy residues T277–F294, G335–R364, and K371–A392. 3 N-linked (GlcNAc...) asparagine glycosylation sites follow: N410, N422, and N432. Transmembrane regions (helical) follow at residues P462 to G481 and G487 to I511. The Selectivity filter part_3 motif lies at G487–P491. F489 provides a ligand contact to chloride. The segment at residues G519–V533 is an intramembrane region (helical). An intramembrane region (note=Loop between two helices) is located at residues V534–M536. Residues T537–T548 constitute an intramembrane region (helical). The segment at residues N549 to T552 is an intramembrane region (note=Loop between two helices). The helical transmembrane segment at Y553–F571 threads the bilayer. Residues N572–I869 lie on the Cytoplasmic side of the membrane. Y576 provides a ligand contact to chloride. Residues M605–S662 form the CBS 1 domain. H630–A632 serves as a coordination point for ATP. Residue S773 is modified to Phosphoserine. Residues M807 to T868 enclose the CBS 2 domain. T849–N852 is a binding site for ATP.

This sequence belongs to the chloride channel (TC 2.A.49) family. ClC-6/CLCN6 subfamily. In terms of processing, N-glycosylated on several asparagine residues. Testis, ovary, small intestine, brain and skeletal muscle. Low level expression in aortic and coronary vascular smooth muscle cells, and aortic endothelial cells. Isoform 3 is only detected in kidney.

The protein resides in the late endosome membrane. It carries out the reaction 2 chloride(in) + H(+)(out) = 2 chloride(out) + H(+)(in). Voltage-gated channel mediating the exchange of chloride ions against protons. Functions as antiporter and contributes to the acidification of the late endosome lumen. The CLC channel family contains both chloride channels and proton-coupled anion transporters that exchange chloride or another anion for protons. The presence of conserved gating glutamate residues is typical for family members that function as antiporters. The sequence is that of H(+)/Cl(-) exchange transporter 6 from Homo sapiens (Human).